Reading from the N-terminus, the 177-residue chain is Large ribosomal subunit protein uL6 (177 aa).

Belongs to the universal ribosomal protein uL6 family. In terms of assembly, part of the 50S ribosomal subunit.

This protein binds to the 23S rRNA, and is important in its secondary structure. It is located near the subunit interface in the base of the L7/L12 stalk, and near the tRNA binding site of the peptidyltransferase center. The protein is Large ribosomal subunit protein uL6 of Vibrio cholerae serotype O1 (strain ATCC 39541 / Classical Ogawa 395 / O395).